Here is an 88-residue protein sequence, read N- to C-terminus: Large ribosomal subunit protein bL27 (88 aa).

Residues 1–24 (MAHKKGTGSTRNGRDSNSKRLGVK) are disordered.

This sequence belongs to the bacterial ribosomal protein bL27 family.

The sequence is that of Large ribosomal subunit protein bL27 from Synechococcus sp. (strain CC9311).